Here is a 404-residue protein sequence, read N- to C-terminus: Argininosuccinate synthase (404 aa).

ATP contacts are provided by residues 11 to 19 (AYSGGLDTS) and Ala-38. L-citrulline is bound by residues Tyr-91 and Ser-96. ATP is bound at residue Gly-121. L-aspartate is bound by residues Thr-123, Asn-127, and Asp-128. Asn-127 contacts L-citrulline. Positions 131, 181, 190, 266, and 278 each coordinate L-citrulline.

Belongs to the argininosuccinate synthase family. Type 1 subfamily. As to quaternary structure, homotetramer.

It localises to the cytoplasm. The catalysed reaction is L-citrulline + L-aspartate + ATP = 2-(N(omega)-L-arginino)succinate + AMP + diphosphate + H(+). It participates in amino-acid biosynthesis; L-arginine biosynthesis; L-arginine from L-ornithine and carbamoyl phosphate: step 2/3. The polypeptide is Argininosuccinate synthase (Sulfurimonas denitrificans (strain ATCC 33889 / DSM 1251) (Thiomicrospira denitrificans (strain ATCC 33889 / DSM 1251))).